The chain runs to 297 residues: UDP-N-acetylenolpyruvoylglucosamine reductase (297 aa).

The FAD-binding PCMH-type domain maps to 26-191 (KSGGTADWLF…VAARFRGHPG (166 aa)). The active site involves R171. Catalysis depends on S220, which acts as the Proton donor. E290 is an active-site residue.

The protein belongs to the MurB family. Requires FAD as cofactor.

The protein localises to the cytoplasm. The catalysed reaction is UDP-N-acetyl-alpha-D-muramate + NADP(+) = UDP-N-acetyl-3-O-(1-carboxyvinyl)-alpha-D-glucosamine + NADPH + H(+). It participates in cell wall biogenesis; peptidoglycan biosynthesis. Cell wall formation. The chain is UDP-N-acetylenolpyruvoylglucosamine reductase from Novosphingobium aromaticivorans (strain ATCC 700278 / DSM 12444 / CCUG 56034 / CIP 105152 / NBRC 16084 / F199).